A 313-amino-acid polypeptide reads, in one-letter code: Methionyl-tRNA formyltransferase (313 aa).

A (6S)-5,6,7,8-tetrahydrofolate-binding site is contributed by 112–115 (SLLP).

Belongs to the Fmt family.

It carries out the reaction L-methionyl-tRNA(fMet) + (6R)-10-formyltetrahydrofolate = N-formyl-L-methionyl-tRNA(fMet) + (6S)-5,6,7,8-tetrahydrofolate + H(+). In terms of biological role, attaches a formyl group to the free amino group of methionyl-tRNA(fMet). The formyl group appears to play a dual role in the initiator identity of N-formylmethionyl-tRNA by promoting its recognition by IF2 and preventing the misappropriation of this tRNA by the elongation apparatus. In Roseiflexus castenholzii (strain DSM 13941 / HLO8), this protein is Methionyl-tRNA formyltransferase.